The sequence spans 447 residues: N-succinylarginine dihydrolase (447 aa).

Substrate is bound by residues 19-28 (AGLSFGNEAS), N110, and 137-138 (HR). E174 is an active-site residue. Substrate is bound at residue R213. The active site involves H249. Substrate is bound by residues D251 and N364. The Nucleophile role is filled by C370.

It belongs to the succinylarginine dihydrolase family. In terms of assembly, homodimer.

It carries out the reaction N(2)-succinyl-L-arginine + 2 H2O + 2 H(+) = N(2)-succinyl-L-ornithine + 2 NH4(+) + CO2. It participates in amino-acid degradation; L-arginine degradation via AST pathway; L-glutamate and succinate from L-arginine: step 2/5. Functionally, catalyzes the hydrolysis of N(2)-succinylarginine into N(2)-succinylornithine, ammonia and CO(2). The protein is N-succinylarginine dihydrolase of Yersinia pseudotuberculosis serotype O:1b (strain IP 31758).